We begin with the raw amino-acid sequence, 389 residues long: Succinate--CoA ligase [ADP-forming] subunit beta (389 aa).

The ATP-grasp domain maps to 9 to 244; sequence KQLFADYGLP…PSQEDERERR (236 aa). Residues Lys46, 53–55, Glu99, Thr102, and Glu107 each bind ATP; that span reads GRG. Mg(2+) contacts are provided by Asn199 and Asp213. Substrate contacts are provided by residues Asn264 and 321-323; that span reads GIV.

It belongs to the succinate/malate CoA ligase beta subunit family. As to quaternary structure, heterotetramer of two alpha and two beta subunits. Mg(2+) is required as a cofactor.

It carries out the reaction succinate + ATP + CoA = succinyl-CoA + ADP + phosphate. It catalyses the reaction GTP + succinate + CoA = succinyl-CoA + GDP + phosphate. Its pathway is carbohydrate metabolism; tricarboxylic acid cycle; succinate from succinyl-CoA (ligase route): step 1/1. Its function is as follows. Succinyl-CoA synthetase functions in the citric acid cycle (TCA), coupling the hydrolysis of succinyl-CoA to the synthesis of either ATP or GTP and thus represents the only step of substrate-level phosphorylation in the TCA. The beta subunit provides nucleotide specificity of the enzyme and binds the substrate succinate, while the binding sites for coenzyme A and phosphate are found in the alpha subunit. In Alcanivorax borkumensis (strain ATCC 700651 / DSM 11573 / NCIMB 13689 / SK2), this protein is Succinate--CoA ligase [ADP-forming] subunit beta.